The sequence spans 483 residues: Probable ATP-dependent RNA helicase DDX49 (483 aa).

A Q motif motif is present at residues 2–30 (AGFAELGLSSWLVEQCRQLGLKQPTPVQL). Residues 33–207 (IPAILEGRDC…GLATNQPFFW (175 aa)) form the Helicase ATP-binding domain. 46-53 (AKTGSGKT) is a binding site for ATP. A DEAD box motif is present at residues 152–155 (DEAD). Residues 218-382 (QLDQRYLLVP…EFSVEEAEVL (165 aa)) form the Helicase C-terminal domain. The segment at 444–483 (KEKVEETLKRQKAGRAGHKGRPPRTPSGSHSGPVPSQGLV) is disordered. The span at 453–465 (RQKAGRAGHKGRP) shows a compositional bias: basic residues.

This sequence belongs to the DEAD box helicase family. DDX49/DBP8 subfamily.

It localises to the nucleus. Its subcellular location is the nucleolus. It carries out the reaction ATP + H2O = ADP + phosphate + H(+). Its function is as follows. ATP-dependent RNA helicase that plays a role in various aspects of RNA metabolism including the regulation of mRNA export and the levels of pre-ribosomal RNA. Regulates the stability and synthesis of pre-ribosomal RNA and thereby regulates cell proliferation. Also possesses antiviral activity by recognizing gammaherpesvirus transcripts in the context of lytic reactivation. This is Probable ATP-dependent RNA helicase DDX49 (DDX49) from Homo sapiens (Human).